The sequence spans 361 residues: Chorismate synthase (361 aa).

The NADP(+) site is built by arginine 48 and arginine 54. Residues 125–127, 238–239, glycine 278, 293–297, and arginine 319 each bind FMN; these read RSS, NA, and KPTSS.

The protein belongs to the chorismate synthase family. In terms of assembly, homotetramer. FMNH2 serves as cofactor.

The enzyme catalyses 5-O-(1-carboxyvinyl)-3-phosphoshikimate = chorismate + phosphate. It participates in metabolic intermediate biosynthesis; chorismate biosynthesis; chorismate from D-erythrose 4-phosphate and phosphoenolpyruvate: step 7/7. Catalyzes the anti-1,4-elimination of the C-3 phosphate and the C-6 proR hydrogen from 5-enolpyruvylshikimate-3-phosphate (EPSP) to yield chorismate, which is the branch point compound that serves as the starting substrate for the three terminal pathways of aromatic amino acid biosynthesis. This reaction introduces a second double bond into the aromatic ring system. This chain is Chorismate synthase, found in Pectobacterium atrosepticum (strain SCRI 1043 / ATCC BAA-672) (Erwinia carotovora subsp. atroseptica).